The chain runs to 81 residues: Sulfur carrier protein TusA (81 aa).

Residue Cys-19 is the Cysteine persulfide intermediate of the active site.

This sequence belongs to the sulfur carrier protein TusA family. In terms of assembly, interacts with IscS.

Its subcellular location is the cytoplasm. Its pathway is tRNA modification. Its function is as follows. Sulfur carrier protein involved in sulfur trafficking in the cell. Part of a sulfur-relay system required for 2-thiolation during synthesis of 2-thiouridine of the modified wobble base 5-methylaminomethyl-2-thiouridine (mnm(5)s(2)U) in tRNA. Interacts with IscS and stimulates its cysteine desulfurase activity. Accepts an activated sulfur from IscS, which is then transferred to TusD, and thus determines the direction of sulfur flow from IscS to 2-thiouridine formation. Also appears to be involved in sulfur transfer for the biosynthesis of molybdopterin. The polypeptide is Sulfur carrier protein TusA (Shigella boydii serotype 18 (strain CDC 3083-94 / BS512)).